A 156-amino-acid polypeptide reads, in one-letter code: Arginine repressor (156 aa).

It belongs to the ArgR family.

It localises to the cytoplasm. It participates in amino-acid biosynthesis; L-arginine biosynthesis [regulation]. Its function is as follows. Regulates arginine biosynthesis genes. The chain is Arginine repressor from Shigella boydii serotype 18 (strain CDC 3083-94 / BS512).